A 355-amino-acid polypeptide reads, in one-letter code: Heterogeneous nuclear ribonucleoprotein D0 (355 aa).

The disordered stretch occupies residues 1 to 92; that stretch reads MSEEQFGGDG…SPRHSEAATA (92 aa). S2 carries the post-translational modification N-acetylserine. 2 stretches are compositionally biased toward low complexity: residues 11-20 and 27-42; these read AAAAATAAVG and EGAM…AAAG. Gly residues predominate over residues 43-58; that stretch reads SGAGTGGGTASGGTEG. Over residues 64 to 73 the composition is skewed to basic and acidic residues; sequence EGAKIDASKN. S71 carries the phosphoserine modification. Residue K72 forms a Glycyl lysine isopeptide (Lys-Gly) (interchain with G-Cter in SUMO2) linkage. S80, S82, and S83 each carry phosphoserine. At T91 the chain carries Phosphothreonine. RRM domains are found at residues 97 to 179 and 182 to 261; these read WKMF…KTKE and KKIF…MSKE. N6-methyllysine is present on K119. The residue at position 127 (T127) is a Phosphothreonine. A Glycyl lysine isopeptide (Lys-Gly) (interchain with G-Cter in SUMO2) cross-link involves residue K129. K165 is modified (N6-acetyllysine). A Phosphoserine modification is found at S190. Phosphothreonine is present on T193. K197 is covalently cross-linked (Glycyl lysine isopeptide (Lys-Gly) (interchain with G-Cter in SUMO2)). K243 and K251 each carry N6-acetyllysine. Y263 carries the post-translational modification Omega-N-methylarginine. A Phosphoserine modification is found at S271. An Omega-N-methylarginine modification is found at R272. G273 is modified (N6-acetyllysine). Residues R278, R280, and R282 each carry the omega-N-methylarginine modification. At Q292 the chain carries N6-acetyllysine. At R345 the chain carries Asymmetric dimethylarginine; alternate. R345 carries the post-translational modification Dimethylated arginine; alternate. Position 345 is an omega-N-methylarginine; alternate (R345).

As to quaternary structure, identified in a IGF2BP1-dependent mRNP granule complex containing untranslated mRNAs. Part of a complex associated with the FOS mCRD domain and consisting of PABPC1, PAIP1, CSDE1/UNR and SYNCRIP. Interacts with IGF2BP2. Interacts with GTPBP1. Interacts with EIF4G1; the interaction requires RNA. Interacts with EIF3B and RPS3. Arg-345 is dimethylated, probably to asymmetric dimethylarginine. Post-translationally, methylated by PRMT1, in an insulin-dependent manner. The PRMT1-mediated methylation regulates tyrosine phosphorylation.

Its subcellular location is the nucleus. It is found in the cytoplasm. In terms of biological role, binds with high affinity to RNA molecules that contain AU-rich elements (AREs) found within the 3'-UTR of many proto-oncogenes and cytokine mRNAs. Also binds to double- and single-stranded DNA sequences in a specific manner and functions a transcription factor. Each of the RNA-binding domains specifically can bind solely to a single-stranded non-monotonous 5'-UUAG-3' sequence and also weaker to the single-stranded 5'-TTAGGG-3' telomeric DNA repeat. Binds RNA oligonucleotides with 5'-UUAGGG-3' repeats more tightly than the telomeric single-stranded DNA 5'-TTAGGG-3' repeats. Binding of RRM1 to DNA inhibits the formation of DNA quadruplex structure which may play a role in telomere elongation. May be involved in translationally coupled mRNA turnover. Implicated with other RNA-binding proteins in the cytoplasmic deadenylation/translational and decay interplay of the FOS mRNA mediated by the major coding-region determinant of instability (mCRD) domain. May play a role in the regulation of the rhythmic expression of circadian clock core genes. Directly binds to the 3'UTR of CRY1 mRNA and induces CRY1 rhythmic translation. May also be involved in the regulation of PER2 translation. The protein is Heterogeneous nuclear ribonucleoprotein D0 (HNRNPD) of Homo sapiens (Human).